Consider the following 115-residue polypeptide: Large ribosomal subunit protein bL20c (115 aa).

This sequence belongs to the bacterial ribosomal protein bL20 family.

It localises to the plastid. It is found in the chloroplast. Functionally, binds directly to 23S ribosomal RNA and is necessary for the in vitro assembly process of the 50S ribosomal subunit. It is not involved in the protein synthesizing functions of that subunit. The sequence is that of Large ribosomal subunit protein bL20c from Angiopteris evecta (Mule's foot fern).